The primary structure comprises 447 residues: ATP-dependent protease ATPase subunit HslU (447 aa).

ATP-binding positions include isoleucine 18, glycine 60–glutamate 65, aspartate 259, glutamate 325, and arginine 397.

The protein belongs to the ClpX chaperone family. HslU subfamily. In terms of assembly, a double ring-shaped homohexamer of HslV is capped on each side by a ring-shaped HslU homohexamer. The assembly of the HslU/HslV complex is dependent on binding of ATP.

The protein localises to the cytoplasm. In terms of biological role, ATPase subunit of a proteasome-like degradation complex; this subunit has chaperone activity. The binding of ATP and its subsequent hydrolysis by HslU are essential for unfolding of protein substrates subsequently hydrolyzed by HslV. HslU recognizes the N-terminal part of its protein substrates and unfolds these before they are guided to HslV for hydrolysis. The chain is ATP-dependent protease ATPase subunit HslU from Burkholderia pseudomallei (strain K96243).